A 253-amino-acid chain; its full sequence is TasA anchoring/assembly protein (253 aa).

The first 32 residues, 1–32, serve as a signal peptide directing secretion; sequence MFRLFHNQQKAKTKLKVLLIFQLSVIFSLTAA. An important for TasA fiber formation region spans residues 50–57; sequence TFDVSLQT. A compositionally biased stretch (basic and acidic residues) spans 190–241; sequence EKPTVPKKETKSDVKKENETTQKDIPEKTMKEETSQEAVTKEKETQSDQKES. Positions 190-253 are disordered; that stretch reads EKPTVPKKET…EDEKSNEADQ (64 aa).

The protein localises to the secreted. It is found in the cell wall. Functionally, required for biofilm formation. Required for the proper anchoring and polymerization of TasA amyloid fibers at the cell surface. Is also a minor component of TasA fibers. This Bacillus subtilis (strain 168) protein is TasA anchoring/assembly protein.